Consider the following 300-residue polypeptide: uncharacterized protein (300 aa).

Tyr53 serves as the catalytic Proton donor. An NADP(+)-binding site is contributed by 210–220; sequence SPLAGGKVFTE.

The protein belongs to the aldo/keto reductase family. Aldo/keto reductase 2 subfamily.

This is an uncharacterized protein from Bacillus subtilis (strain 168).